Reading from the N-terminus, the 583-residue chain is 1-deoxy-D-xylulose-5-phosphate synthase (583 aa).

Thiamine diphosphate contacts are provided by residues histidine 74 and 115-117 (GHS). Position 146 (aspartate 146) interacts with Mg(2+). Thiamine diphosphate is bound by residues 147-148 (GG), asparagine 175, phenylalanine 244, and glutamate 327. Asparagine 175 provides a ligand contact to Mg(2+).

Belongs to the transketolase family. DXPS subfamily. Homodimer. It depends on Mg(2+) as a cofactor. Requires thiamine diphosphate as cofactor.

The catalysed reaction is D-glyceraldehyde 3-phosphate + pyruvate + H(+) = 1-deoxy-D-xylulose 5-phosphate + CO2. It functions in the pathway metabolic intermediate biosynthesis; 1-deoxy-D-xylulose 5-phosphate biosynthesis; 1-deoxy-D-xylulose 5-phosphate from D-glyceraldehyde 3-phosphate and pyruvate: step 1/1. Functionally, catalyzes the acyloin condensation reaction between C atoms 2 and 3 of pyruvate and glyceraldehyde 3-phosphate to yield 1-deoxy-D-xylulose-5-phosphate (DXP). The sequence is that of 1-deoxy-D-xylulose-5-phosphate synthase from Myxococcus xanthus (strain DK1622).